A 363-amino-acid polypeptide reads, in one-letter code: Outer membrane porin F (363 aa).

The signal sequence occupies residues 1 to 22 (MMKRKILAAVIPALLAAATANA). A beta stranded transmembrane segment spans residues 23-28 (AEIYNK). Position 29 (Asp29) is a topological domain, periplasmic. The beta stranded transmembrane segment at 30-45 (GNKLDLYGKAVGRHVW) threads the bilayer. Over 46–56 (TTTGDSKNADQ) the chain is Extracellular. A beta stranded membrane pass occupies residues 57-69 (TYAQIGFKGETQI). Topologically, residues 70 to 71 (NT) are periplasmic. The beta stranded transmembrane segment at 72–84 (DLTGFGQWEYRTK) threads the bilayer. The Extracellular portion of the chain corresponds to 85–99 (ADRAEGEQQNSNLVR). Residues 100-108 (LAFAGLKYA) traverse the membrane as a beta stranded segment. A topological domain (periplasmic) is located at residue Glu109. Residues 110–117 (VGSIDYGR) traverse the membrane as a beta stranded segment. Residues 118-154 (NYGIVYDVESYTDMAPYFSGETWGGAYTDNYMTSRAG) lie on the Extracellular side of the membrane. Residues 155–161 (GLLTYRN) traverse the membrane as a beta stranded segment. Over 162 to 169 (SDFFGLVD) the chain is Periplasmic. A beta stranded membrane pass occupies residues 170–181 (GLSFGIQYQGKN). Topologically, residues 182–192 (QDNHSINSQNG) are extracellular. A beta stranded transmembrane segment spans residues 193–203 (DGVGYTMAYEF). Residue Asp204 is a topological domain, periplasmic. The chain crosses the membrane as a beta stranded span at residues 205–217 (GFGVTAAYSNSKR). The Extracellular portion of the chain corresponds to 218-230 (TNDQQDRDGNGDR). A beta stranded membrane pass occupies residues 231–242 (AESWAVGAKYDA). Residue Asn243 is a topological domain, periplasmic. A beta stranded transmembrane segment spans residues 244–256 (NVYLAAVYAETRN). The Extracellular portion of the chain corresponds to 257–272 (MSIVENTVTDTVEMAN). Residues 273 to 285 (KTQNLEVVAQYQF) form a beta stranded membrane-spanning segment. Residues 286-287 (DF) lie on the Periplasmic side of the membrane. The beta stranded transmembrane segment at 288 to 301 (GLRPAISYVQSKGK) threads the bilayer. Residues 302-312 (QLNGADGSADL) lie on the Extracellular side of the membrane. A beta stranded membrane pass occupies residues 313 to 324 (AKYIQAGATYYF). The Periplasmic segment spans residues 325 to 326 (NK). A beta stranded transmembrane segment spans residues 327 to 336 (NMNVWVDYRF). Residues 337–353 (NLLDENDYSSSYVGTDD) are Extracellular-facing. A beta stranded transmembrane segment spans residues 354–363 (QAAVGITYQF).

Belongs to the Gram-negative porin family. Homotrimer. Forms mixed heterotrimers with OmpC and with PhoE; other mixed heterotrimers with other porins are also probable.

The protein resides in the cell outer membrane. Forms pores that allow passive diffusion of small molecules across the outer membrane. The chain is Outer membrane porin F (ompF) from Salmonella typhi.